The sequence spans 492 residues: Serine incorporator 4 (492 aa).

The next 10 helical transmembrane spans lie at F58 to V78, A113 to V133, S148 to P168, I179 to A199, F217 to L237, L254 to I274, S281 to L301, I330 to A350, G421 to F441, and V464 to A484.

Belongs to the TDE1 family.

Its subcellular location is the membrane. Functionally, incorporates a polar amino acid serine into membranes and facilitates the synthesis of two serine-derived lipids, phosphatidylserine and sphingolipids. This is Serine incorporator 4 (Serinc4) from Rattus norvegicus (Rat).